The sequence spans 366 residues: Melatonin receptor type 1A (366 aa).

The Extracellular segment spans residues 1–45 (MAGRLWGSPGGTPKGNGSSALLNVSQAAPGAGDGVRPRPSWLAAT). Asparagine 16 and asparagine 23 each carry an N-linked (GlcNAc...) asparagine glycan. Residues 46–66 (LASILIFTIVVDIVGNLLVVL) form a helical membrane-spanning segment. At 67–79 (SVYRNKKLRNAGN) the chain is on the cytoplasmic side. A helical membrane pass occupies residues 80 to 100 (VFVVSLAVADLLVAVYPYPLA). Over 101-118 (LASIVNNGWSLSSLHCQL) the chain is Extracellular. Cysteine 116 and cysteine 193 are oxidised to a cystine. A helical transmembrane segment spans residues 119–139 (SGFLMGLSVIGSVFSITGIAI). The Cytoplasmic portion of the chain corresponds to 140–158 (NRYCCICHSLRYGKLYSGT). The chain crosses the membrane as a helical span at residues 159 to 179 (NSLCYVFLIWTLTLVAIVPNL). Over 180–203 (CVGTLQYDPRIYSCTFTQSVSSAY) the chain is Extracellular. Residues 204–224 (TIAVVVFHFIVPMLVVVFCYL) form a helical membrane-spanning segment. The Cytoplasmic segment spans residues 225–256 (RIWALVLQVRWKVKPDNKPKLKPQDFRNFVTM). A helical transmembrane segment spans residues 257 to 277 (FVVFVLFAICWAPLNFIGLVV). The Extracellular segment spans residues 278–290 (ASDPASMAPRIPE). Residues 291–311 (WLFVASYYMAYFNSCLNAIIY) form a helical membrane-spanning segment. Residues 312-366 (GLLNQNFRQEYRKIIVSLCTTKMFFVDSSNHVADRIKRKPSPLIANHNLIKVDSV) are Cytoplasmic-facing.

It belongs to the G-protein coupled receptor 1 family.

The protein resides in the cell membrane. In terms of biological role, high affinity receptor for melatonin. Likely to mediate the reproductive and circadian actions of melatonin. The activity of this receptor is mediated by pertussis toxin sensitive G proteins that inhibit adenylate cyclase activity. Possibly involved in sleep induction, by melatonin activation of the potassium channel KCNMA1/BK and the dissociation of G-beta and G-gamma subunits, thereby decreasing synaptic transmission. This is Melatonin receptor type 1A (MTNR1A) from Ovis aries (Sheep).